We begin with the raw amino-acid sequence, 126 residues long: Methylglyoxal synthase (126 aa).

Positions 1-126 (MAGGKCIALI…AERLIKTLNH (126 aa)) constitute an MGS-like domain. Substrate contacts are provided by residues histidine 12, lysine 16, 38–41 (TGTT), and 59–60 (SG). Catalysis depends on aspartate 65, which acts as the Proton donor/acceptor. Histidine 92 provides a ligand contact to substrate.

This sequence belongs to the methylglyoxal synthase family.

The enzyme catalyses dihydroxyacetone phosphate = methylglyoxal + phosphate. In terms of biological role, catalyzes the formation of methylglyoxal from dihydroxyacetone phosphate. This chain is Methylglyoxal synthase, found in Rhizobium rhizogenes (strain K84 / ATCC BAA-868) (Agrobacterium radiobacter).